Reading from the N-terminus, the 113-residue chain is Photosystem II reaction center Psb28 protein (113 aa).

This sequence belongs to the Psb28 family. In terms of assembly, part of the photosystem II complex.

The protein resides in the cellular thylakoid membrane. This Prochlorococcus marinus (strain NATL1A) protein is Photosystem II reaction center Psb28 protein.